Here is a 476-residue protein sequence, read N- to C-terminus: Protein transport protein Sec61 subunit alpha (476 aa).

Over 2 to 33 (GIKFLEVIKPFCAVLPEIQKPERKIQFREKVL) the chain is Cytoplasmic. A helical membrane pass occupies residues 34–53 (WTAITLFIFLVCCQIPLFGI). The Lumenal portion of the chain corresponds to 54–76 (MSSDSADPFYWMRVILASNRGTL). A helical transmembrane segment spans residues 77-96 (MELGISPIVTSGLIMQLLAG). Over 97–117 (AKIIEVGDTPKDRALFNGAQK) the chain is Cytoplasmic. A helical membrane pass occupies residues 118–138 (LFGMIITIGQAIVYVMTGMYG). At 139 to 144 (DPSEMG) the chain is on the lumenal side. A helical membrane pass occupies residues 145 to 165 (AGICLLIIIQLFVAGLIVLLL). Residues 166 to 172 (DELLQKG) are Cytoplasmic-facing. The chain crosses the membrane as a helical span at residues 173–193 (YGLGSGISLFIATNICETIVW). The Lumenal segment spans residues 194–240 (KAFSPTTVNTGRGTEFEGAIIALFHLLATRTDKVRALREAFYRQNLP). Residues 241-261 (NILNLIATVFVFAVVIYFQGF) form a helical membrane-spanning segment. Over 262 to 288 (RVDLPIKSARYRGQYNTYPIKLFYTSN) the chain is Cytoplasmic. The chain crosses the membrane as a helical span at residues 289–309 (IPIILQSALVSNLYVISQMLS). Topologically, residues 310–354 (TRFSGNFLVNLLGTWSDATSGGPARAYPVAGLCYYLSPPESFGSV) are lumenal. Residues 355-375 (LDDPVHAAIYIVFMLGSCAFF) traverse the membrane as a helical segment. Over 376-420 (SKTWIEVSGSSAKDVAKQLKEQQMVMRGHRETSMVHELNRYIPTA) the chain is Cytoplasmic. Residues 421 to 441 (AAFGGLCIGGLSVMADFLGAI) form a helical membrane-spanning segment. The Lumenal portion of the chain corresponds to 442–445 (GSGT). Residues 446–462 (GILLAVTIIYQYFEIFV) form a helical membrane-spanning segment. The Cytoplasmic portion of the chain corresponds to 463-476 (KEQSEMGSMGALLF).

Belongs to the SecY/SEC61-alpha family. As to quaternary structure, the SEC61 channel-forming translocon complex consists of channel-forming core components SEC61A1, SEC61B and SEC61G and different auxiliary components such as SEC62 and SEC63. The SEC61 channel associates with the multi-pass translocon (MPT) complex.

The protein resides in the endoplasmic reticulum membrane. Its function is as follows. Component of SEC61 channel-forming translocon complex that mediates transport of signal peptide-containing precursor polypeptides across the endoplasmic reticulum (ER). Forms a ribosome receptor and a gated pore in the ER membrane, both functions required for cotranslational translocation of nascent polypeptides. May cooperate with auxiliary protein SEC62, SEC63 and HSPA5/BiP to enable post-translational transport of small presecretory proteins. The SEC61 channel is also involved in ER membrane insertion of transmembrane proteins: it mediates membrane insertion of the first few transmembrane segments of proteins, while insertion of subsequent transmembrane regions of multi-pass membrane proteins is mediated by the multi-pass translocon (MPT) complex. This chain is Protein transport protein Sec61 subunit alpha (sec61a), found in Dissostichus mawsoni (Antarctic cod).